The following is a 942-amino-acid chain: E3 ubiquitin-protein ligase HACE1 (942 aa).

7 ANK repeats span residues 23 to 55 (LPDD…NSKF), 64 to 93 (VKRS…NPNY), 97 to 126 (SGCT…DVNI), 130 to 159 (EGLT…NVDV), 163 to 192 (MGQT…DINR), 196 to 226 (SGAT…YLPD), and 228 to 253 (NGIT…QYHP). The interval 428–459 (KGPDHQDATPTPSFAAAGTESRKELSTDTGDS) is disordered. A compositionally biased stretch (basic and acidic residues) spans 447 to 459 (ESRKELSTDTGDS). The HECT domain maps to 607–942 (NCAKLKQGIA…HCGSYGYTMA (336 aa)). The active-site Glycyl thioester intermediate is the Cys909.

The protein resides in the golgi apparatus. The protein localises to the golgi stack membrane. Its subcellular location is the cytoplasm. It is found in the endoplasmic reticulum. It carries out the reaction S-ubiquitinyl-[E2 ubiquitin-conjugating enzyme]-L-cysteine + [acceptor protein]-L-lysine = [E2 ubiquitin-conjugating enzyme]-L-cysteine + N(6)-ubiquitinyl-[acceptor protein]-L-lysine.. It participates in protein modification; protein ubiquitination. Functionally, E3 ubiquitin-protein ligase involved in Golgi membrane fusion and regulation of small GTPases. Acts as a regulator of Golgi membrane dynamics during the cell cycle: recruited to Golgi membrane by Rab proteins and regulates postmitotic Golgi membrane fusion. Acts by mediating ubiquitination during mitotic Golgi disassembly, ubiquitination serving as a signal for Golgi reassembly later, after cell division. The protein is E3 ubiquitin-protein ligase HACE1 (HACE1) of Gallus gallus (Chicken).